Consider the following 697-residue polypeptide: DNA ligase (697 aa).

NAD(+) is bound by residues D44 to D48, S93 to L94, and E123. K125 serves as the catalytic N6-AMP-lysine intermediate. NAD(+) contacts are provided by R146, E186, K302, and K326. Residues C420, C423, C439, and C445 each coordinate Zn(2+). In terms of domain architecture, BRCT spans S609–V697.

Belongs to the NAD-dependent DNA ligase family. LigA subfamily. Mg(2+) serves as cofactor. The cofactor is Mn(2+).

It catalyses the reaction NAD(+) + (deoxyribonucleotide)n-3'-hydroxyl + 5'-phospho-(deoxyribonucleotide)m = (deoxyribonucleotide)n+m + AMP + beta-nicotinamide D-nucleotide.. Its function is as follows. DNA ligase that catalyzes the formation of phosphodiester linkages between 5'-phosphoryl and 3'-hydroxyl groups in double-stranded DNA using NAD as a coenzyme and as the energy source for the reaction. It is essential for DNA replication and repair of damaged DNA. The protein is DNA ligase of Rhodococcus opacus (strain B4).